The following is a 302-amino-acid chain: 33 kDa chaperonin (302 aa).

2 cysteine pairs are disulfide-bonded: C240/C242 and C273/C276.

It belongs to the HSP33 family. Under oxidizing conditions two disulfide bonds are formed involving the reactive cysteines. Under reducing conditions zinc is bound to the reactive cysteines and the protein is inactive.

The protein resides in the cytoplasm. Functionally, redox regulated molecular chaperone. Protects both thermally unfolding and oxidatively damaged proteins from irreversible aggregation. Plays an important role in the bacterial defense system toward oxidative stress. The chain is 33 kDa chaperonin from Synechocystis sp. (strain ATCC 27184 / PCC 6803 / Kazusa).